The sequence spans 448 residues: Trigger factor (448 aa).

Residues 172-257 (GDRVTVDFVG…MKKIEWPHLP (86 aa)) enclose the PPIase FKBP-type domain.

The protein belongs to the FKBP-type PPIase family. Tig subfamily.

Its subcellular location is the cytoplasm. It carries out the reaction [protein]-peptidylproline (omega=180) = [protein]-peptidylproline (omega=0). Involved in protein export. Acts as a chaperone by maintaining the newly synthesized protein in an open conformation. Functions as a peptidyl-prolyl cis-trans isomerase. This Paraburkholderia xenovorans (strain LB400) protein is Trigger factor.